Consider the following 443-residue polypeptide: 23S rRNA (uracil(1939)-C(5))-methyltransferase RlmD (443 aa).

The TRAM domain occupies 10-68 (RVTTKQTLTVTVNSLDPFGQGVAHHQGKAIFIPGALPGEQAEIELTEQKRQYSRGKLKR). Positions 81, 87, 90, and 168 each coordinate [4Fe-4S] cluster. S-adenosyl-L-methionine contacts are provided by Q271, F300, N305, E321, N348, and D369. C395 functions as the Nucleophile in the catalytic mechanism.

The protein belongs to the class I-like SAM-binding methyltransferase superfamily. RNA M5U methyltransferase family. RlmD subfamily.

The enzyme catalyses uridine(1939) in 23S rRNA + S-adenosyl-L-methionine = 5-methyluridine(1939) in 23S rRNA + S-adenosyl-L-homocysteine + H(+). In terms of biological role, catalyzes the formation of 5-methyl-uridine at position 1939 (m5U1939) in 23S rRNA. The protein is 23S rRNA (uracil(1939)-C(5))-methyltransferase RlmD of Yersinia enterocolitica serotype O:8 / biotype 1B (strain NCTC 13174 / 8081).